A 235-amino-acid chain; its full sequence is Small ribosomal subunit protein uS2 (235 aa).

Belongs to the universal ribosomal protein uS2 family.

In Geobacillus sp. (strain WCH70), this protein is Small ribosomal subunit protein uS2.